The chain runs to 194 residues: Molybdenum cofactor guanylyltransferase (194 aa).

GTP is bound by residues 12 to 14 (LAG), K25, N53, D71, and D101. Position 101 (D101) interacts with Mg(2+).

This sequence belongs to the MobA family. Monomer. Mg(2+) is required as a cofactor.

Its subcellular location is the cytoplasm. It catalyses the reaction Mo-molybdopterin + GTP + H(+) = Mo-molybdopterin guanine dinucleotide + diphosphate. In terms of biological role, transfers a GMP moiety from GTP to Mo-molybdopterin (Mo-MPT) cofactor (Moco or molybdenum cofactor) to form Mo-molybdopterin guanine dinucleotide (Mo-MGD) cofactor. The polypeptide is Molybdenum cofactor guanylyltransferase (Escherichia coli O157:H7).